Here is a 278-residue protein sequence, read N- to C-terminus: Large ribosomal subunit protein uL2 (278 aa).

Disordered stretches follow at residues 29–53 (PVKSLTEGKRKTGGRNNKGHVTSRG) and 221–278 (RGVA…KKKR). A compositionally biased stretch (basic residues) spans 269 to 278 (IRSRHAKKKR).

The protein belongs to the universal ribosomal protein uL2 family. Part of the 50S ribosomal subunit. Forms a bridge to the 30S subunit in the 70S ribosome.

In terms of biological role, one of the primary rRNA binding proteins. Required for association of the 30S and 50S subunits to form the 70S ribosome, for tRNA binding and peptide bond formation. It has been suggested to have peptidyltransferase activity; this is somewhat controversial. Makes several contacts with the 16S rRNA in the 70S ribosome. This is Large ribosomal subunit protein uL2 from Erythrobacter litoralis (strain HTCC2594).